We begin with the raw amino-acid sequence, 472 residues long: Membrane-bound lytic murein transglycosylase F (472 aa).

The signal sequence occupies residues 1 to 24 (MRLLVIFLLALLLMACKEAPKPLA). The interval 25-259 (DPRTTKEIIV…HLIDRYYGHA (235 aa)) is non-LT domain. Residues 260 to 472 (DRLKPVDVTT…NGFGNTLSQE (213 aa)) are LT domain. Glu306 is a catalytic residue.

In the N-terminal section; belongs to the bacterial solute-binding protein 3 family. This sequence in the C-terminal section; belongs to the transglycosylase Slt family.

The protein localises to the cell outer membrane. The enzyme catalyses Exolytic cleavage of the (1-&gt;4)-beta-glycosidic linkage between N-acetylmuramic acid (MurNAc) and N-acetylglucosamine (GlcNAc) residues in peptidoglycan, from either the reducing or the non-reducing ends of the peptidoglycan chains, with concomitant formation of a 1,6-anhydrobond in the MurNAc residue.. In terms of biological role, murein-degrading enzyme that degrades murein glycan strands and insoluble, high-molecular weight murein sacculi, with the concomitant formation of a 1,6-anhydromuramoyl product. Lytic transglycosylases (LTs) play an integral role in the metabolism of the peptidoglycan (PG) sacculus. Their lytic action creates space within the PG sacculus to allow for its expansion as well as for the insertion of various structures such as secretion systems and flagella. This chain is Membrane-bound lytic murein transglycosylase F, found in Methylobacillus flagellatus (strain ATCC 51484 / DSM 6875 / VKM B-1610 / KT).